A 123-amino-acid polypeptide reads, in one-letter code: MEKKLPFSFKKKEKLTAYDDASIHELHKQLKLRTEAKKSKDKERTKEKEKHESLAKEKKPKLPFKKRIVNLWFGVDKEINKIVWVKGRQLIIIFLLILLVSGLMVGIFFGINQLLITLGIFKN.

Positions 31 to 57 (KLRTEAKKSKDKERTKEKEKHESLAKE) are enriched in basic and acidic residues. A disordered region spans residues 31–58 (KLRTEAKKSKDKERTKEKEKHESLAKEK). The chain crosses the membrane as a helical span at residues 91-111 (IIIFLLILLVSGLMVGIFFGI).

It localises to the membrane. This is an uncharacterized protein from Mycoplasma genitalium (strain ATCC 33530 / DSM 19775 / NCTC 10195 / G37) (Mycoplasmoides genitalium).